The sequence spans 550 residues: Methionine--tRNA ligase (550 aa).

The 'HIGH' region signature appears at 14-24 (PYANGSLHIGH). Zn(2+) is bound by residues Cys145, Cys148, Cys158, and Cys161. A 'KMSKS' region motif is present at residues 331–335 (KMSKS). ATP is bound at residue Lys334.

This sequence belongs to the class-I aminoacyl-tRNA synthetase family. MetG type 1 subfamily. Monomer. The cofactor is Zn(2+).

The protein resides in the cytoplasm. The catalysed reaction is tRNA(Met) + L-methionine + ATP = L-methionyl-tRNA(Met) + AMP + diphosphate. Is required not only for elongation of protein synthesis but also for the initiation of all mRNA translation through initiator tRNA(fMet) aminoacylation. This is Methionine--tRNA ligase from Wigglesworthia glossinidia brevipalpis.